Consider the following 61-residue polypeptide: [Thr6]-bradykinyl-Val,Asp (61 aa).

The signal sequence occupies residues 1 to 22; the sequence is MSFLKKSLFLVLFLGLVSFSIC. Residues 23–50 constitute a propeptide that is removed on maturation; that stretch reads EEEKRETEEEENEDEMDKESEEKRESPE. A disordered region spans residues 24–61; it reads EEKRETEEEENEDEMDKESEEKRESPERPPGFTPFRVD. Residues 30–41 are compositionally biased toward acidic residues; that stretch reads EEEENEDEMDKE. Residue Pro53 is modified to 4-hydroxyproline; in form [Hyp3,Thr6]-bradykinyl-Val,Asp and [Hyp3,Thr6]-bradykinin.

It belongs to the frog skin active peptide (FSAP) family. Bradykinin-related peptide subfamily. In terms of tissue distribution, expressed by the skin glands.

Its subcellular location is the secreted. Induces relaxation of rat smooth muscle from tail artery (EC(50)=16.8 nM) and contraction of that from ileum (EC(50)=205 nM), urinary bladder (EC(50)=895 nM) and uterus (EC(50)=60.3 nM). Binds to both bradykinin receptor B1 (BDKRB1) and B2 (BDKRB2). Functionally, [Hyp3,Thr6]-bradykinin: Induces relaxation of rat smooth muscle from tail artery (EC(50)=56.7 nM) and contraction of that from ileum (EC(50)=588 nM), urinary bladder (EC(50)=4.6 uM) and uterus (EC(50)=3.9 nM). Binds to both bradykinin receptor B1 (BDKRB1) and B2 (BDKRB2). In arterial smooth muscle, the effect via BDKRB1 is stronger, in uterus, ileum and urinary bladder that via BDKRB2. In terms of biological role, induces relaxation of rat smooth muscle from tail artery (EC(50)=10.8 nM) and contraction of that from ileum (EC(50)=645 nM), urinary bladder (EC(50)=1.1 uM) and uterus (EC(50)=1.2 uM). Binds to both bradykinin receptor B1 (BDKRB1) and B2 (BDKRB2). Apart from uterus smooth muscle, the effect via B2 is stronger. Its function is as follows. [Hyp3,Thr6]-bradykinyl-Val,Asp: Induces relaxation of rat smooth muscle from tail artery (EC(50)=3.5 nM) and contraction of that from ileum (EC(50)=223 nM), urinary bladder (EC(50)=1.5 uM) and uterus (EC(50)=356 nM). Binds to both bradykinin receptor B1 (BDKRB1) and B2 (BDKRB2); the effects via B2 a stronger. The chain is [Thr6]-bradykinyl-Val,Asp from Agalychnis callidryas (Red-eyed tree frog).